The primary structure comprises 78 residues: Acyl carrier protein (78 aa).

Residues 2–77 form the Carrier domain; the sequence is STIEERVKKI…AAIDYVKAHQ (76 aa). The residue at position 37 (Ser37) is an O-(pantetheine 4'-phosphoryl)serine.

The protein belongs to the acyl carrier protein (ACP) family. 4'-phosphopantetheine is transferred from CoA to a specific serine of apo-ACP by AcpS. This modification is essential for activity because fatty acids are bound in thioester linkage to the sulfhydryl of the prosthetic group.

Its subcellular location is the cytoplasm. It participates in lipid metabolism; fatty acid biosynthesis. Carrier of the growing fatty acid chain in fatty acid biosynthesis. The polypeptide is Acyl carrier protein (Pseudomonas putida (strain ATCC 700007 / DSM 6899 / JCM 31910 / BCRC 17059 / LMG 24140 / F1)).